The following is a 358-amino-acid chain: Ribosomal RNA large subunit methyltransferase M (358 aa).

Residues serine 187, 220 to 223 (CPGG), aspartate 239, aspartate 259, and aspartate 276 each bind S-adenosyl-L-methionine. Catalysis depends on lysine 305, which acts as the Proton acceptor.

This sequence belongs to the class I-like SAM-binding methyltransferase superfamily. RNA methyltransferase RlmE family. RlmM subfamily. In terms of assembly, monomer.

The protein resides in the cytoplasm. It carries out the reaction cytidine(2498) in 23S rRNA + S-adenosyl-L-methionine = 2'-O-methylcytidine(2498) in 23S rRNA + S-adenosyl-L-homocysteine + H(+). In terms of biological role, catalyzes the 2'-O-methylation at nucleotide C2498 in 23S rRNA. The sequence is that of Ribosomal RNA large subunit methyltransferase M from Shewanella woodyi (strain ATCC 51908 / MS32).